The primary structure comprises 320 residues: Ferrochelatase (320 aa).

Residues H194 and E275 each coordinate Fe cation.

This sequence belongs to the ferrochelatase family. Monomer.

Its subcellular location is the cytoplasm. It catalyses the reaction heme b + 2 H(+) = protoporphyrin IX + Fe(2+). Its pathway is porphyrin-containing compound metabolism; protoheme biosynthesis; protoheme from protoporphyrin-IX: step 1/1. Functionally, catalyzes the ferrous insertion into protoporphyrin IX. This chain is Ferrochelatase, found in Escherichia coli O139:H28 (strain E24377A / ETEC).